We begin with the raw amino-acid sequence, 345 residues long: Histidinol-phosphate aminotransferase (345 aa).

The residue at position 206 (lysine 206) is an N6-(pyridoxal phosphate)lysine.

It belongs to the class-II pyridoxal-phosphate-dependent aminotransferase family. Histidinol-phosphate aminotransferase subfamily. In terms of assembly, homodimer. Pyridoxal 5'-phosphate is required as a cofactor.

The catalysed reaction is L-histidinol phosphate + 2-oxoglutarate = 3-(imidazol-4-yl)-2-oxopropyl phosphate + L-glutamate. Its pathway is amino-acid biosynthesis; L-histidine biosynthesis; L-histidine from 5-phospho-alpha-D-ribose 1-diphosphate: step 7/9. The chain is Histidinol-phosphate aminotransferase from Bacteroides fragilis (strain YCH46).